A 273-amino-acid chain; its full sequence is Proteasome subunit beta type-10 (273 aa).

Met1 is modified (N-acetylmethionine). Positions 1–39 (MLKQAVEPTGGFSFENCQRNASLEHVLPGLRVPHARKTG) are cleaved as a propeptide — removed in mature form. Catalysis depends on Thr40, which acts as the Nucleophile.

It belongs to the peptidase T1B family. As to quaternary structure, the 26S proteasome consists of a 20S proteasome core and two 19S regulatory subunits. The 20S proteasome core is composed of 28 subunits that are arranged in four stacked rings, resulting in a barrel-shaped structure. The two end rings are each formed by seven alpha subunits, and the two central rings are each formed by seven beta subunits. The catalytic chamber with the active sites is on the inside of the barrel. Component of the immunoproteasome, where it displaces the equivalent housekeeping subunit PSMB7. Component of the spermatoproteasome, a form of the proteasome specifically found in testis. In terms of processing, autocleaved. The resulting N-terminal Thr residue of the mature subunit is responsible for the nucleophile proteolytic activity. As to expression, detected in liver (at protein level).

Its subcellular location is the cytoplasm. The protein resides in the nucleus. It carries out the reaction Cleavage of peptide bonds with very broad specificity.. The proteasome is a multicatalytic proteinase complex which is characterized by its ability to cleave peptides with Arg, Phe, Tyr, Leu, and Glu adjacent to the leaving group at neutral or slightly basic pH. The proteasome has an ATP-dependent proteolytic activity. This subunit is involved in antigen processing to generate class I binding peptides. Plays a role in determining the T-cell repertoire for an antiviral T-cell response. This chain is Proteasome subunit beta type-10 (Psmb10), found in Mus musculus (Mouse).